We begin with the raw amino-acid sequence, 699 residues long: Long-chain-fatty-acid--CoA ligase 1 (699 aa).

The residue at position 1 (Met1) is an N-acetylmethionine. Position 9 is a 3'-nitrotyrosine (Tyr9). A helical; Signal-anchor for type III membrane protein transmembrane segment spans residues 25 to 45; sequence LPTNTLMGFGAFAALTTFWYA. Residues 46 to 699 lie on the Cytoplasmic side of the membrane; sequence TRPKALKPPC…IDELYSTIKI (654 aa). A Phosphotyrosine modification is found at Tyr85. Position 86 is a 3'-nitrotyrosine (Tyr86). An O-linked (GlcNAc) serine glycan is attached at Ser136. Lys208, Lys357, and Lys387 each carry N6-acetyllysine. Ser621 carries the post-translational modification Phosphoserine. Lys633 carries the N6-acetyllysine modification.

It belongs to the ATP-dependent AMP-binding enzyme family. It depends on Mg(2+) as a cofactor. In terms of tissue distribution, liver, heart, epididymal adipose and to a lesser extent brain, small intestine and lung.

Its subcellular location is the mitochondrion outer membrane. The protein localises to the peroxisome membrane. It localises to the microsome membrane. The protein resides in the endoplasmic reticulum membrane. The catalysed reaction is a long-chain fatty acid + ATP + CoA = a long-chain fatty acyl-CoA + AMP + diphosphate. It catalyses the reaction (5Z,8Z,11Z,14Z)-eicosatetraenoate + ATP + CoA = (5Z,8Z,11Z,14Z)-eicosatetraenoyl-CoA + AMP + diphosphate. The enzyme catalyses 3,7,11,15-tetramethylhexadecanoate + ATP + CoA = phytanoyl-CoA + AMP + diphosphate. It carries out the reaction hexadecanoate + ATP + CoA = hexadecanoyl-CoA + AMP + diphosphate. The catalysed reaction is (E)-hexadec-2-enoate + ATP + CoA = (2E)-hexadecenoyl-CoA + AMP + diphosphate. It catalyses the reaction 2,6,10,14-tetramethylpentadecanoate + ATP + CoA = pristanoyl-CoA + AMP + diphosphate. The enzyme catalyses 14,15-epoxy-(5Z,8Z,11Z)-eicosatrienoate + ATP + CoA = 14,15-epoxy-(5Z,8Z,11Z)-eicosatrienoyl-CoA + AMP + diphosphate. It carries out the reaction 5-hydroxy-(6E,8Z,11Z,14Z)-eicosatetraenoate + ATP + CoA = 5-hydroxy-(6E,8Z,11Z,14Z)-eicosatetraenoyl-CoA + AMP + diphosphate. The catalysed reaction is 12-hydroxy-(5Z,8Z,10E,14Z)-eicosatetraenoate + ATP + CoA = 12-hydroxy-(5Z,8Z,10E,14Z)-eicosatetraenoyl-CoA + AMP + diphosphate. It catalyses the reaction 15-hydroxy-(5Z,8Z,11Z,13E)-eicosatetraenoate + ATP + CoA = 15-hydroxy-(5Z,8Z,11Z,13E)-eicosatetraenoyl-CoA + AMP + diphosphate. The enzyme catalyses (9Z)-octadecenoate + ATP + CoA = (9Z)-octadecenoyl-CoA + AMP + diphosphate. Inhibited at high temperature and by arachidonate. Its function is as follows. Catalyzes the conversion of long-chain fatty acids to their active form acyl-CoAs for both synthesis of cellular lipids, and degradation via beta-oxidation. Preferentially uses palmitoleate, oleate and linoleate. Preferentially activates arachidonate than epoxyeicosatrienoic acids (EETs) or hydroxyeicosatrienoic acids (HETEs). This is Long-chain-fatty-acid--CoA ligase 1 from Rattus norvegicus (Rat).